Here is a 1972-residue protein sequence, read N- to C-terminus: Myosin-11 (1972 aa).

Phosphoserine occurs at positions 8, 23, and 40. In terms of domain architecture, Myosin N-terminal SH3-like spans 31 to 81 (VAKKLVWVPSEKQGFEAASIKEEKGDEVVVELVENGKKVTVGKDDIQKMNP). Positions 85–783 (SKVEDMAELT…VLAHLEEERD (699 aa)) constitute a Myosin motor domain. Residue K129 is modified to N6,N6,N6-trimethyllysine. 178–185 (GESGAGKT) contributes to the ATP binding site. Actin-binding stretches follow at residues 661 to 683 (LGKL…IPNH) and 762 to 776 (RIGQ…GVLA). The IQ domain occupies 786–815 (ITDVIMAFQAMCRGYLARKAFTKRQQQLTA). Residues 844–1934 (LLQVTRQEEE…KSKLRRGNEA (1091 aa)) are a coiled coil. A Phosphothreonine modification is found at T1177. A phosphoserine mark is found at S1684 and S1722. The span at 1771–1788 (NELATERSTAQKNESARQ) shows a compositional bias: polar residues. Disordered stretches follow at residues 1771-1797 (NELA…NKEL) and 1867-1972 (QYKE…KASE). Residues 1867 to 1876 (QYKEQAEKGN) show a composition bias toward basic and acidic residues. The C-terminal stretch occupies residues 1935–1972 (SFVPSRRAGGRRVIENTDGSEEEMDARDSDFNGTKASE). T1951 is modified (phosphothreonine). A phosphoserine mark is found at S1954 and S1971.

This sequence belongs to the TRAFAC class myosin-kinesin ATPase superfamily. Myosin family. As to quaternary structure, muscle myosin is a hexameric protein that consists of 2 heavy chain subunits (MHC), 2 alkali light chain subunits (MLC) and 2 regulatory light chain subunits (MLC-2).

The protein resides in the melanosome. Its subcellular location is the cytoplasm. The protein localises to the myofibril. Functionally, muscle contraction. In Mus musculus (Mouse), this protein is Myosin-11 (Myh11).